Reading from the N-terminus, the 85-residue chain is U4-theraphotoxin-Hhn1d (85 aa).

The first 22 residues, 1-22, serve as a signal peptide directing secretion; the sequence is MKVTLIAILTCAAVLVLHTTAA. The propeptide occupies 23-48; the sequence is EELEAESQLMEVGMPDTELAAVDEER. 3 disulfides stabilise this stretch: Cys-52–Cys-66, Cys-56–Cys-77, and Cys-71–Cys-82.

This sequence belongs to the neurotoxin 12 (Hwtx-2) family. 02 (Hwtx-2) subfamily. As to expression, expressed by the venom gland.

Its subcellular location is the secreted. Its function is as follows. Postsynaptic neurotoxin. The chain is U4-theraphotoxin-Hhn1d from Cyriopagopus hainanus (Chinese bird spider).